Reading from the N-terminus, the 338-residue chain is Ketol-acid reductoisomerase (NADP(+)) (338 aa).

In terms of domain architecture, KARI N-terminal Rossmann spans 1–181; it reads MKVYYDKDCD…GGGRTGIIET (181 aa). Residues 24–27, Arg47, Ser50, Thr52, and 82–85 contribute to the NADP(+) site; these read YGSQ and DEFQ. The active site involves His107. Gly133 contacts NADP(+). In terms of domain architecture, KARI C-terminal knotted spans 182–327; sequence TFKDETETDL…EQLRAMMPWI (146 aa). Mg(2+) is bound by residues Asp190, Glu194, Glu226, and Glu230. A substrate-binding site is contributed by Ser251.

It belongs to the ketol-acid reductoisomerase family. Mg(2+) serves as cofactor.

The enzyme catalyses (2R)-2,3-dihydroxy-3-methylbutanoate + NADP(+) = (2S)-2-acetolactate + NADPH + H(+). It carries out the reaction (2R,3R)-2,3-dihydroxy-3-methylpentanoate + NADP(+) = (S)-2-ethyl-2-hydroxy-3-oxobutanoate + NADPH + H(+). Its pathway is amino-acid biosynthesis; L-isoleucine biosynthesis; L-isoleucine from 2-oxobutanoate: step 2/4. The protein operates within amino-acid biosynthesis; L-valine biosynthesis; L-valine from pyruvate: step 2/4. Involved in the biosynthesis of branched-chain amino acids (BCAA). Catalyzes an alkyl-migration followed by a ketol-acid reduction of (S)-2-acetolactate (S2AL) to yield (R)-2,3-dihydroxy-isovalerate. In the isomerase reaction, S2AL is rearranged via a Mg-dependent methyl migration to produce 3-hydroxy-3-methyl-2-ketobutyrate (HMKB). In the reductase reaction, this 2-ketoacid undergoes a metal-dependent reduction by NADPH to yield (R)-2,3-dihydroxy-isovalerate. In Ectopseudomonas mendocina (strain ymp) (Pseudomonas mendocina), this protein is Ketol-acid reductoisomerase (NADP(+)).